The following is an 802-amino-acid chain: DNA mismatch repair protein MutS (802 aa).

617–624 (GPNMGGKS) lines the ATP pocket.

This sequence belongs to the DNA mismatch repair MutS family.

In terms of biological role, this protein is involved in the repair of mismatches in DNA. It is possible that it carries out the mismatch recognition step. This protein has a weak ATPase activity. The sequence is that of DNA mismatch repair protein MutS from Buchnera aphidicola subsp. Acyrthosiphon pisum (strain Tuc7).